The primary structure comprises 69 residues: UPF0150 protein ssr1258 (69 aa).

Belongs to the UPF0150 family.

This is UPF0150 protein ssr1258 from Synechocystis sp. (strain ATCC 27184 / PCC 6803 / Kazusa).